Here is a 355-residue protein sequence, read N- to C-terminus: 3-isopropylmalate dehydrogenase (355 aa).

Residues arginine 90, arginine 100, arginine 128, and aspartate 222 each contribute to the substrate site. The Mg(2+) site is built by aspartate 222, aspartate 246, and aspartate 250. Glycine 280–asparagine 292 provides a ligand contact to NAD(+).

Belongs to the isocitrate and isopropylmalate dehydrogenases family. LeuB type 1 subfamily. As to quaternary structure, homodimer. The cofactor is Mg(2+). It depends on Mn(2+) as a cofactor.

The protein localises to the cytoplasm. The catalysed reaction is (2R,3S)-3-isopropylmalate + NAD(+) = 4-methyl-2-oxopentanoate + CO2 + NADH. Its pathway is amino-acid biosynthesis; L-leucine biosynthesis; L-leucine from 3-methyl-2-oxobutanoate: step 3/4. Catalyzes the oxidation of 3-carboxy-2-hydroxy-4-methylpentanoate (3-isopropylmalate) to 3-carboxy-4-methyl-2-oxopentanoate. The product decarboxylates to 4-methyl-2 oxopentanoate. This Burkholderia multivorans (strain ATCC 17616 / 249) protein is 3-isopropylmalate dehydrogenase.